We begin with the raw amino-acid sequence, 1063 residues long: Unconventional myosin-Ic (1063 aa).

An N-acetylmethionine modification is found at Met1. Phosphoserine is present on Thr10. One can recognise a Myosin motor domain in the interval 47–731; the sequence is GVQDFVLLEN…TLFATEDSLE (685 aa). Residues Asn88, Tyr96, 139–148, and 192–196 each bind ATP; these read SGESGAGKTE and NDNSS. Lys383 carries the N6-methyllysine modification. At Ser408 the chain carries Phosphoserine. An N6-acetyllysine modification is found at Lys486. Phosphoserine is present on Ser536. The tract at residues 608–630 is actin-binding; it reads LLQLVEILRSKEPAYIRCIKPND. 2 consecutive IQ domains span residues 734–757 and 758–786; these read RQSLATKIQAAWRGFHWRQKFLRV and KRSAICIQSWWRGTLGRRKAAKRKWAAQT. Phosphoserine occurs at positions 864 and 1041. A TH1 domain is found at 885 to 1059; the sequence is KDNYPQSVPR…NGHLAVVAPR (175 aa).

This sequence belongs to the TRAFAC class myosin-kinesin ATPase superfamily. Myosin family. As to quaternary structure, interacts (via its IQ motifs) with CABP1 and CIB1; the interaction with CABP1 and CIB1 is calcium-dependent. Interacts (via tail domain) with PLEKHB1 (via PH domain); the interaction is not affected by the presence or absence of calcium and CALM. Interacts with POLR1A. Interacts with POLR2A. Component of the B-WICH complex, at least composed of SMARCA5/SNF2H, BAZ1B/WSTF, SF3B1, DEK, MYO1C, ERCC6, MYBBP1A and DDX21. Interacts (via its IQ motifs) with CALM; this precludes interaction with YWHAB. Interacts with YWHAB; this precludes interaction with CALM. Interacts with RPS6. Interacts with actin. Interacts with LLPH. Interacts with GLUT4. Interacts (via its IQ motifs) with SH3BGRL3; the interaction is dependent on calcium and takes place at membrane ruffles. Post-translationally, isoform 2 contains a N-acetylmethionine at position 1. In terms of tissue distribution, isoform 3 is expressed in small intestine, pancreas, brain, kidney, skin, heart muscle, testis, striated muscle, spleen, liver and lung (at protein level). Expressed in brain, testis, adrenal glands, thymus, spleen, kidney, lung, heart, cochlea and vestibule. Expressed in sensory hair cells of the inner ear. Expressed in adipocytes.

Its subcellular location is the cytoplasm. The protein resides in the nucleus. The protein localises to the cell cortex. It localises to the cell projection. It is found in the stereocilium membrane. Its subcellular location is the cytoplasmic vesicle. The protein resides in the ruffle membrane. The protein localises to the nucleolus. It localises to the nucleoplasm. Its function is as follows. Myosins are actin-based motor molecules with ATPase activity. Unconventional myosins serve in intracellular movements. Their highly divergent tails bind to membranous compartments, which then are moved relative to actin filaments. Involved in glucose transporter recycling in response to insulin by regulating movement of intracellular GLUT4-containing vesicles to the plasma membrane. Component of the hair cell's (the sensory cells of the inner ear) adaptation-motor complex. Acts as a mediator of adaptation of mechanoelectrical transduction in stereocilia of vestibular hair cells. Binds phosphoinositides and links the actin cytoskeleton to cellular membranes. Involved in regulation of transcription. Associated with transcriptional active ribosomal genes. Appears to cooperate with the WICH chromatin-remodeling complex to facilitate transcription. Necessary for the formation of the first phosphodiester bond during transcription initiation. This is Unconventional myosin-Ic (Myo1c) from Mus musculus (Mouse).